The primary structure comprises 322 residues: GRB2-related adaptor protein 2 (322 aa).

The SH3 1 domain maps to 1–56; it reads MEATAKFDFMASGEDELSFRTGDILKILSNQEEWLKAELGSQEGYVPKNFIDIEFP. Position 45 is a phosphotyrosine (tyrosine 45). The region spanning 58–149 is the SH2 domain; sequence WFHEGLSRHQ…QKQVFLRDGT (92 aa). The residue at position 106 (lysine 106) is an N6-acetyllysine. The segment at 143-216 is disordered; that stretch reads VFLRDGTQDQ…TPGPQPPQQQ (74 aa). Residues 148–163 show a composition bias toward basic and acidic residues; sequence GTQDQGHRGNSLDRRS. Phosphoserine is present on serine 186. Positions 193-204 are enriched in low complexity; the sequence is PQQFHPHQQPSP. Serine 230 bears the Phosphoserine mark. Threonine 254 is subject to Phosphothreonine. One can recognise an SH3 2 domain in the interval 263 to 322; that stretch reads GRVRWARALYDFEALEEDELGFRSGEVVEVLDSSNPSWWTGRLHNKLGLFPANYVAPMMR.

Belongs to the GRB2/sem-5/DRK family. In terms of assembly, interacts with phosphorylated LAT and LAX1 upon TCR activation. Interacts with SHB. Interacts with PTPN23. Interacts with phosphorylated LIME1 upon TCR activation.

The protein resides in the nucleus. The protein localises to the cytoplasm. It localises to the endosome. Its function is as follows. Interacts with SLP-76 to regulate NF-AT activation. Binds to tyrosine-phosphorylated shc. The polypeptide is GRB2-related adaptor protein 2 (Grap2) (Mus musculus (Mouse)).